Reading from the N-terminus, the 622-residue chain is Chaperone protein HscA homolog (622 aa).

It belongs to the heat shock protein 70 family.

Functionally, chaperone involved in the maturation of iron-sulfur cluster-containing proteins. Has a low intrinsic ATPase activity which is markedly stimulated by HscB. The chain is Chaperone protein HscA homolog from Burkholderia pseudomallei (strain 1710b).